Consider the following 139-residue polypeptide: Actin-depolymerizing factor 9 (139 aa).

Positions 7 to 139 constitute an ADF-H domain; it reads GLAVNDECKF…SLDIIRARAH (133 aa).

Belongs to the actin-binding proteins ADF family.

Functionally, actin-depolymerizing protein. Severs actin filaments (F-actin) and binds to actin monomers. This is Actin-depolymerizing factor 9 (ADF9) from Oryza sativa subsp. japonica (Rice).